Here is a 568-residue protein sequence, read N- to C-terminus: Phosphoprotein (568 aa).

Positions 1–23 are disordered; it reads MDQDALISKEDSEVEREASGGRE. The span at 7–20 shows a compositional bias: basic and acidic residues; that stretch reads ISKEDSEVEREASG. The interval 33–41 is N0 binding; sequence DAVLSSEPT. A disordered region spans residues 54–317; it reads INTLQRPGST…SPETDATKKG (264 aa). Basic and acidic residues-rich tracts occupy residues 99 to 110, 150 to 168, and 175 to 193; these read AEAHARNVDKQN, GAEDENREMAANPDKRGED, and EEIRRSAPLPDEREGRADN. Residues serine 249, serine 257, and serine 260 each carry the phosphoserine; by host modification. The segment at 344–411 is multimerization; the sequence is FESSRDASYV…SFRDIYKRFS (68 aa). Residues 364 to 429 are a coiled coil; it reads YAEMAFNVCG…LLMSNLSTLH (66 aa). Residues 412–445 form a l protein binding region; it reads EYQKEQNSLLMSNLSTLHIITDRGGKTDNPDSPT. Residues 433–462 form a disordered region; that stretch reads DRGGKTDNPDSPTRSPSVFAKTKENKTKAT. A phosphoserine; by host mark is found at serine 447 and serine 449. The span at 453–462 shows a compositional bias: basic and acidic residues; that stretch reads KTKENKTKAT. The segment at 479–568 is interaction with the nucleocapsid (N-RNA); sequence DLLREDEFRE…VEEDIESLTN (90 aa).

Belongs to the respirovirus P protein family. In terms of assembly, homotetramer. Interacts (via multimerization domain) with polymerase L; this interaction forms the polymerase complex. Interacts (via N-terminus) with N0; this interaction allows P to chaperon N0 before encapsidation and form the N-P complex. Interacts (via C-terminus) with N-RNA template; this interaction positions the polymerase on the template. In terms of processing, phosphorylated by PKC/PRKCZ, and other unknown kinases. Phosphorylation is necessary for viral transcription and replication. The N-terminus contains the majority of phosphorylated sites. Ser-249 is the major site of phosphorylation, but is not necessary for most functions.

The protein localises to the host cytoplasm. Its function is as follows. Essential cofactor of the RNA polymerase L that plays a central role in the transcription and replication by forming the polymerase complex with RNA polymerase L and recruiting L to the genomic N-RNA template for RNA synthesis. Also plays a central role in the encapsidation of nascent RNA chains by forming the encapsidation complex with the nucleocapsid protein N (N-P complex). Acts as a chaperone for newly synthesized free N protein, so-called N0, allowing encapsidation of nascent RNA chains during replication. The nucleoprotein protein N prevents excessive phosphorylation of P, which leads to down-regulation of viral transcription/ replication. Participates, together with N, in the formation of viral factories (viroplasms), which are large inclusions in the host cytoplasm where replication takes place. Recruits host PI4KB and remodel the host endoplasmic reticulum membrane to form viral replication factories. This chain is Phosphoprotein (P/V/C), found in Sendai virus (strain Ohita) (SeV).